Reading from the N-terminus, the 550-residue chain is Chaperonin GroEL (550 aa).

ATP is bound by residues 30-33 (TLGP), lysine 51, 87-91 (DGTTT), glycine 415, 479-481 (NAA), and aspartate 495.

It belongs to the chaperonin (HSP60) family. In terms of assembly, forms a cylinder of 14 subunits composed of two heptameric rings stacked back-to-back. Interacts with the co-chaperonin GroES.

The protein localises to the cytoplasm. It carries out the reaction ATP + H2O + a folded polypeptide = ADP + phosphate + an unfolded polypeptide.. Its function is as follows. Together with its co-chaperonin GroES, plays an essential role in assisting protein folding. The GroEL-GroES system forms a nano-cage that allows encapsulation of the non-native substrate proteins and provides a physical environment optimized to promote and accelerate protein folding. The chain is Chaperonin GroEL from Marinobacter nauticus (strain ATCC 700491 / DSM 11845 / VT8) (Marinobacter aquaeolei).